An 81-amino-acid polypeptide reads, in one-letter code: LYR motif-containing protein At3g19508 (81 aa).

The protein belongs to the complex I LYR family. LYRM9 subfamily.

The chain is LYR motif-containing protein At3g19508 from Arabidopsis thaliana (Mouse-ear cress).